Here is a 1843-residue protein sequence, read N- to C-terminus: Nonribosomal peptide synthetase SIDD (1843 aa).

A disordered region spans residues 1–83 (MLSIDDHGGG…QQQQQQQQRS (83 aa)). Over residues 65–81 (QQQQQQQQQQQQQQQQQ) the composition is skewed to low complexity. Positions 133 to 528 (TYSELEHLST…TEVEHHIQTC (396 aa)) are adenylation 1. Residues 628 to 647 (KLGATHADEGPQEEPETDAE) are disordered. Positions 641 to 716 (EPETDAEKKL…AMANKSTSIS (76 aa)) constitute a Carrier 1 domain. Residue serine 677 is modified to O-(pantetheine 4'-phosphoryl)serine. Residues 753 to 1175 (VEDVYPCTPL…ALSDDDAAAL (423 aa)) are condensation 1. The 77-residue stretch at 1289–1365 (SATSQRQRRL…EMAAVMECTD (77 aa)) folds into the Carrier 2 domain. Serine 1326 carries the post-translational modification O-(pantetheine 4'-phosphoryl)serine. The condensation 2 stretch occupies residues 1447–1734 (FFDGPVDLRR…LREIAENCGL (288 aa)).

The protein belongs to the NRP synthetase family. It depends on pantetheine 4'-phosphate as a cofactor.

Its pathway is siderophore biosynthesis. Its function is as follows. Nonribosomal peptide synthetase; part of the gene cluster that mediates the biosynthesis of at least 11 siderophores, including beauverichelin A, dimerumic acid (DA), Na-dimethyl coprogen (NADC), eleutherazine B, ferricrocin (FC), fusarinine A, fusarinine C (FsC), metachelin A, mevalonolactone, rhodotorulic acid (RA) and tenellin. This cocktail of siderophores for iron metabolism is essential for virulence, and more specifically for the fungal virulence in penetrating through the host cuticle. Siderophore synthesis is also involved in conidial germination under iron-deficient conditions. SIDC catalyzes the assembly of ferricrocin whereas SIDD catalyzes the assembly of fusarinine C. The sequence is that of Nonribosomal peptide synthetase SIDD from Beauveria bassiana (strain ARSEF 2860) (White muscardine disease fungus).